The sequence spans 380 residues: Serpin B7 (380 aa).

At serine 217 the chain carries Phosphoserine.

This sequence belongs to the serpin family. Ov-serpin subfamily.

It is found in the cytoplasm. Might function as an inhibitor of Lys-specific proteases. Might influence the maturation of megakaryocytes via its action as a serpin. In Mus musculus (Mouse), this protein is Serpin B7 (Serpinb7).